Reading from the N-terminus, the 310-residue chain is Protoheme IX farnesyltransferase (310 aa).

A run of 9 helical transmembrane segments spans residues 37–57, 64–84, 113–133, 134–154, 159–181, 186–208, 215–237, 257–277, and 290–310; these read LITV…DVLL, LTLL…CYLN, ILAL…IVNH, VAAV…TMWL, TINT…AAVT, IDAW…ALAM, RAAG…QIVW, MLVM…GLKI, and MFFF…LVSL.

It belongs to the UbiA prenyltransferase family. Protoheme IX farnesyltransferase subfamily. Interacts with CtaA.

The protein localises to the cell membrane. It catalyses the reaction heme b + (2E,6E)-farnesyl diphosphate + H2O = Fe(II)-heme o + diphosphate. It participates in porphyrin-containing compound metabolism; heme O biosynthesis; heme O from protoheme: step 1/1. Its function is as follows. Converts heme B (protoheme IX) to heme O by substitution of the vinyl group on carbon 2 of heme B porphyrin ring with a hydroxyethyl farnesyl side group. This is Protoheme IX farnesyltransferase from Exiguobacterium sibiricum (strain DSM 17290 / CCUG 55495 / CIP 109462 / JCM 13490 / 255-15).